We begin with the raw amino-acid sequence, 406 residues long: [Pyruvate dehydrogenase (acetyl-transferring)] kinase isozyme 3, mitochondrial (406 aa).

Positions 131–362 (IEYKEKFGFD…DAVIYLKALS (232 aa)) constitute a Histidine kinase domain. ATP is bound at residue 247–254 (ELFKNSMR). K278 carries the post-translational modification N6-succinyllysine. ATP is bound by residues D287, 306-307 (ST), and 323-328 (GFGYGL). Positions 383–406 (TPEADDWSNPSSEPRDASKYKAKQ) are disordered. Over residues 395-406 (EPRDASKYKAKQ) the composition is skewed to basic and acidic residues.

The protein belongs to the PDK/BCKDK protein kinase family. As to quaternary structure, homodimer. Interacts with the pyruvate dehydrogenase complex subunit DLAT, and is part of the multimeric pyruvate dehydrogenase complex that contains multiple copies of pyruvate dehydrogenase (E1), dihydrolipoamide acetyltransferase (DLAT, E2) and lipoamide dehydrogenase (DLD, E3). In terms of tissue distribution, expressed in heart, skeletal muscle, spinal cord, as well as fetal and adult brain.

It is found in the mitochondrion matrix. The enzyme catalyses L-seryl-[pyruvate dehydrogenase E1 alpha subunit] + ATP = O-phospho-L-seryl-[pyruvate dehydrogenase E1 alpha subunit] + ADP + H(+). With respect to regulation, activated by interaction with DLAT. Inhibited by AZD7545, dichloroacetate and radicicol. Functionally, inhibits pyruvate dehydrogenase activity by phosphorylation of the E1 subunit PDHA1, and thereby regulates glucose metabolism and aerobic respiration. Can also phosphorylate PDHA2. Decreases glucose utilization and increases fat metabolism in response to prolonged fasting, and as adaptation to a high-fat diet. Plays a role in glucose homeostasis and in maintaining normal blood glucose levels in function of nutrient levels and under starvation. Plays a role in the generation of reactive oxygen species. The polypeptide is [Pyruvate dehydrogenase (acetyl-transferring)] kinase isozyme 3, mitochondrial (PDK3) (Homo sapiens (Human)).